A 241-amino-acid chain; its full sequence is MVKAVIFTDFDGTVTLEDSNDYLTDTLGFGKEKRLKVFEGVLDDTKSFRQGFMEMLESIHTPFPECIKILEKKIRLDPGFKDTFEWAQENDVPVIVVSSGMKPIIKVLLTRLVGQESIHKIDIVSNEVEIDAHDQWKIIYKDESPFGHDKSRSIDAYKKKFESTLKAGEQRPVYFYCGDGVSDLSAAKECDLLFAKRGKDLVTYCKKQNVPFHEFDTFKDILASMKQVLAGEKTVAELMEN.

Catalysis depends on Asp-9, which acts as the Nucleophile. Mg(2+) contacts are provided by Asp-9, Asp-11, and Asp-179. Asp-11 functions as the Proton donor in the catalytic mechanism.

It belongs to the HAD-like hydrolase superfamily. The cofactor is Mg(2+).

Its subcellular location is the cytoplasm. The protein localises to the nucleus. It carries out the reaction D-ribitol 5-phosphate + H2O = ribitol + phosphate. It catalyses the reaction D-sorbitol 6-phosphate + H2O = D-sorbitol + phosphate. The enzyme catalyses sn-glycerol 1-phosphate + H2O = glycerol + phosphate. The catalysed reaction is D-erythrose 4-phosphate + H2O = D-erythrose + phosphate. Hydrolyzes sugar alcohol (polyol) phosphates. Dephosphorylates a variety of substrates, including: sn-glycerol 1-phosphate (D-glycerol 3-phosphate), D-ribitol 5-phosphate, D-sorbitol 6-phosphate (D-glucitol 6-phosphate), and D-erythrose 4-phosphate. Prevents accumulation of toxic levels of polyol phosphates, which can impair glycolysis by inhibiting glucose-6-phosphate isomerase. This is Polyol phosphate phosphatase PYP1 from Saccharomyces cerevisiae (strain ATCC 204508 / S288c) (Baker's yeast).